The primary structure comprises 622 residues: MPPTQAESVIKNIIREIGQECAAHGEIVPETLVAFMVKAVVLDPSNGFNTDRTLTKSDVQKLVKLCVNRLLDSKNPSLDTIKMQVYFDMNYTSREEFLEEHHQVIESRLSSVSREITDSRACVREELESLYRKIVSYVLLRSGLGSPTDIKIVREATAALQSVFPQTELGTFLTLSKKDKERQLKELTMIVTGIRLFNRDCGKGGEGIDDLPAILQEAIPATTQHVDSQLEVVQEQAYRYTAILEKVAKNPLMSQELQPYMLREALYNVRQCEIFLQVILSDIITCAQEVEMMIKQLEAQLEQLKLTVKSKTAVPTSQVFPIFIALSNLWTSFQDETVLISILSNLTTHLEPFLGAHDLFFPEKVMQVLLDGVTVKTDVCRIKEHIEDKVNVADFKKLEWLFPETTANFDKLLIQYRGFCAYTFATTDGLLLPGNPSIGILKYKDKYYTFNTRDAAYSFAENPENYIDIIREKAKRNAELIQLLELHQQFESLIQYSQMKEVDKRYIKPITKCETGTQTDTHLLPPTIVRSYEWNEWELRRKAIKLANLRRKVTHSVQTDHSHMRRENCSQVYPSKDVGTQSMREGSSRVPRPQIYIAGLRGGQTKTTYGVKVNLTRAVDET.

This sequence belongs to the CFAP206 family.

The protein resides in the cytoplasm. It is found in the cytoskeleton. The protein localises to the cilium axoneme. It localises to the cilium basal body. Functionally, essential for sperm motility and is involved in the regulation of the beating frequency of motile cilia on the epithelial cells of the respiratory tract. Required for the establishment of radial spokes in sperm flagella. The polypeptide is Cilia- and flagella-associated protein 206 (Bos taurus (Bovine)).